The following is a 323-amino-acid chain: Methionyl-tRNA formyltransferase (323 aa).

Residue 115-118 (SLLP) participates in (6S)-5,6,7,8-tetrahydrofolate binding.

This sequence belongs to the Fmt family.

It carries out the reaction L-methionyl-tRNA(fMet) + (6R)-10-formyltetrahydrofolate = N-formyl-L-methionyl-tRNA(fMet) + (6S)-5,6,7,8-tetrahydrofolate + H(+). Attaches a formyl group to the free amino group of methionyl-tRNA(fMet). The formyl group appears to play a dual role in the initiator identity of N-formylmethionyl-tRNA by promoting its recognition by IF2 and preventing the misappropriation of this tRNA by the elongation apparatus. This is Methionyl-tRNA formyltransferase from Lactococcus lactis subsp. cremoris (strain MG1363).